We begin with the raw amino-acid sequence, 477 residues long: Aspartyl/glutamyl-tRNA(Asn/Gln) amidotransferase subunit B (477 aa).

The protein belongs to the GatB/GatE family. GatB subfamily. As to quaternary structure, heterotrimer of A, B and C subunits.

The enzyme catalyses L-glutamyl-tRNA(Gln) + L-glutamine + ATP + H2O = L-glutaminyl-tRNA(Gln) + L-glutamate + ADP + phosphate + H(+). The catalysed reaction is L-aspartyl-tRNA(Asn) + L-glutamine + ATP + H2O = L-asparaginyl-tRNA(Asn) + L-glutamate + ADP + phosphate + 2 H(+). Its function is as follows. Allows the formation of correctly charged Asn-tRNA(Asn) or Gln-tRNA(Gln) through the transamidation of misacylated Asp-tRNA(Asn) or Glu-tRNA(Gln) in organisms which lack either or both of asparaginyl-tRNA or glutaminyl-tRNA synthetases. The reaction takes place in the presence of glutamine and ATP through an activated phospho-Asp-tRNA(Asn) or phospho-Glu-tRNA(Gln). The protein is Aspartyl/glutamyl-tRNA(Asn/Gln) amidotransferase subunit B of Ureaplasma urealyticum serovar 10 (strain ATCC 33699 / Western).